The chain runs to 293 residues: Elongation factor Ts (293 aa).

Residues 80 to 83 (TDFV) are involved in Mg(2+) ion dislocation from EF-Tu.

This sequence belongs to the EF-Ts family.

The protein resides in the cytoplasm. In terms of biological role, associates with the EF-Tu.GDP complex and induces the exchange of GDP to GTP. It remains bound to the aminoacyl-tRNA.EF-Tu.GTP complex up to the GTP hydrolysis stage on the ribosome. This is Elongation factor Ts from Aeromonas hydrophila subsp. hydrophila (strain ATCC 7966 / DSM 30187 / BCRC 13018 / CCUG 14551 / JCM 1027 / KCTC 2358 / NCIMB 9240 / NCTC 8049).